The sequence spans 505 residues: Catalase (505 aa).

Catalysis depends on residues histidine 56 and asparagine 129. Position 339 (tyrosine 339) interacts with heme.

This sequence belongs to the catalase family. The cofactor is heme.

The protein resides in the cytoplasm. The enzyme catalyses 2 H2O2 = O2 + 2 H2O. Decomposes hydrogen peroxide into water and oxygen; serves to protect cells from the toxic effects of hydrogen peroxide. This is Catalase (katA) from Helicobacter pylori (strain J99 / ATCC 700824) (Campylobacter pylori J99).